Consider the following 1160-residue polypeptide: Pesticidal crystal protein Cry8Ca (1160 aa).

This sequence belongs to the delta endotoxin family.

Promotes colloidosmotic lysis by binding to the midgut epithelial cells of insects. Active on various scarabaeid beetles such as Anomala cuprea, A.rufocuprea and Popillia japonica. In Bacillus thuringiensis subsp. japonensis, this protein is Pesticidal crystal protein Cry8Ca (cry8Ca).